A 434-amino-acid chain; its full sequence is Pre-mRNA-splicing factor PRP46 (434 aa).

7 WD repeats span residues 120 to 160 (GHTG…LKIT), 163 to 202 (GHVM…AIRD), 205 to 244 (GHLS…EIMV), 247 to 288 (GHKS…KVLT), 290 to 329 (HSRN…TNFQ), 331 to 369 (QNTG…KYQS), and 380 to 419 (ESER…TEDT).

It belongs to the WD repeat PRL1/PRL2 family. As to quaternary structure, associated with the spliceosome.

It localises to the cytoplasm. Its subcellular location is the nucleus. Functionally, involved in pre-mRNA splicing and required for cell cycle progression at G2/M. This chain is Pre-mRNA-splicing factor PRP46 (PRP46), found in Kluyveromyces lactis (strain ATCC 8585 / CBS 2359 / DSM 70799 / NBRC 1267 / NRRL Y-1140 / WM37) (Yeast).